The primary structure comprises 467 residues: Putative serine/threonine-protein kinase R400 (467 aa).

One can recognise a Protein kinase domain in the interval 99 to 467 (GVKLIYIKSG…STGQKPTKKV (369 aa)). Residues 105 to 113 (IKSGTTGHT) and K129 each bind ATP. D272 serves as the catalytic Proton acceptor. Residues 443 to 467 (LFQQGNGSKQPVPKKSTGQKPTKKV) form a disordered region. Positions 458–467 (STGQKPTKKV) are enriched in polar residues.

Belongs to the protein kinase superfamily. Ser/Thr protein kinase family.

It is found in the virion. It catalyses the reaction L-seryl-[protein] + ATP = O-phospho-L-seryl-[protein] + ADP + H(+). The enzyme catalyses L-threonyl-[protein] + ATP = O-phospho-L-threonyl-[protein] + ADP + H(+). This is Putative serine/threonine-protein kinase R400 from Acanthamoeba polyphaga mimivirus (APMV).